The sequence spans 325 residues: Probable ABC transporter permease YtrD (325 aa).

Helical transmembrane passes span V16–M36, S63–I83, M113–L133, L146–T166, V179–G199, Y233–V253, P272–A292, and G298–I318.

It belongs to the ABC-5 integral membrane protein family. As to quaternary structure, the complex is composed of 2 ATP-binding proteins (YtrB and YtrE), 2 transmembrane proteins (YtrC and YtrD) and a solute-binding protein (YtrF).

The protein resides in the cell membrane. Part of the ABC transporter complex YtrBCDEF that plays a role in acetoin utilization during stationary phase and sporulation. This chain is Probable ABC transporter permease YtrD (ytrD), found in Bacillus subtilis (strain 168).